Consider the following 195-residue polypeptide: Putative kinase protein 143R (195 aa).

An ATP-binding site is contributed by 8–16 (GIIGAGKST). Substrate contacts are provided by E31, Y43, and Q54. The active-site Proton acceptor is the E78. Residues R79 and E142 each coordinate substrate.

This sequence belongs to the DCK/DGK family.

This Acheta domesticus (House cricket) protein is Putative kinase protein 143R.